The following is a 295-amino-acid chain: MVSLLRRTFSEEIKEELVNVPFGSREEVISELLGFIKARGDLDVKSRHIVFSLHSFAASRRLLNLMKYLSKPVSEIIVEKSHNIKKRYIKITAEYSESFMVIEPFFDVALFVSFLRGLFLSGGSMTNPRYHYHLEINLFEEETLALTRKSLKDFFNINAGIIELRNTRKLYIKSIKDILVFLEAIGVQRKLEEIDRIVTERKVIGDVNRTVNFIEANAIRTANSTARQIRAIELIKENMGLENLPEDLRRVALVRLRNKELSLRELGKKLNLTKSQIYSKLKRIIKIAERFGDVK.

The segment at residues 262-293 (SLRELGKKLNLTKSQIYSKLKRIIKIAERFGD) is a DNA-binding region (H-T-H motif).

The protein belongs to the WhiA family.

Its function is as follows. Involved in cell division and chromosome segregation. This Thermotoga maritima (strain ATCC 43589 / DSM 3109 / JCM 10099 / NBRC 100826 / MSB8) protein is Probable cell division protein WhiA.